A 447-amino-acid polypeptide reads, in one-letter code: Serine/threonine-protein phosphatase 2A 55 kDa regulatory subunit B gamma isoform (447 aa).

WD repeat units lie at residues 22–61 (TEAD…KNAP), 87–128 (EIEE…KRPE), 171–209 (GHTY…RSFN), 220–260 (DLTE…LCDK), 279–317 (EIIS…RPIE), 334–375 (ENDC…DVTL), and 410–446 (DFTK…NSDM).

This sequence belongs to the phosphatase 2A regulatory subunit B family. PP2A consists of a common heterodimeric core enzyme, composed of a 36 kDa catalytic subunit (subunit C) and a 65 kDa constant regulatory subunit (PR65 or subunit A), that associates with a variety of regulatory subunits. Proteins that associate with the core dimer include three families of regulatory subunits B (the R2/B/PR55/B55, R3/B''/PR72/PR130/PR59 and R5/B'/B56 families), the 48 kDa variable regulatory subunit, viral proteins, and cell signaling molecules. Interacts with IER5.

Its function is as follows. The B regulatory subunit might modulate substrate selectivity and catalytic activity, and might also direct the localization of the catalytic enzyme to a particular subcellular compartment. The sequence is that of Serine/threonine-protein phosphatase 2A 55 kDa regulatory subunit B gamma isoform (PPP2R2C) from Homo sapiens (Human).